The sequence spans 573 residues: MDEGGLPLLPDSLVYQIFLSLGPADVLAAGLVCRQWQAVSRDEFLWKEQFYRYYQVARDVPRHPAATSWYEEFRRLYDMVPCVEVQTLKEHTDQVLHLSFSHSGYQFASCSKDCTVKIWNNDLTISLLHSADMRPYNWSYTQFSQFNQDDSLLLASGVFLGPHNSSSGEIAVISLDSFALLSRVRNKPYDVFGCWLTETSLISGNLHRIGDITSCSVLWLNNAFQDVESENVNVVKRLFKIQNLNASTIRTVMVADCSRFDSPDLLLDASDQAGLPCRVFDLGGDTEEEATDPGLHTSGSDHVKKGLRRVFDSVLDGHGQLSDCALETKVAELLAQGHTKPPECNDADTRNKYLIFTTGCLTYSPHQIGIKQILPHQMTTAGPVLGEGRGSDAFFDALDHVIDVHGHIIGMGLSPDNRYLYVNSRAWPPGSVVADPMQPPPIAEEIDLLVFDLKTMREVKRALRAHRAYTPNDECFFIFLDVSRDFVASGAEDRHGYIWDRHYNICLAKLRHEDVVNSVAFSPQEQELLLTASDDATIKAWRSPRIVRVLQAPRPRPRPRPRPFFSWFASHRR.

Residues 3–49 form the F-box domain; it reads EGGLPLLPDSLVYQIFLSLGPADVLAAGLVCRQWQAVSRDEFLWKEQ. The stretch at 90 to 129 is one WD 1 repeat; it reads EHTDQVLHLSFSHSGYQFASCSKDCTVKIWNNDLTISLLH. S151 carries the post-translational modification Phosphoserine; by PLK4. A D-box motif is present at residues 308–316; the sequence is RRVFDSVLD. 2 WD repeats span residues 470–509 and 511–551; these read TPND…CLAK and RHED…RVLQ.

It belongs to the FBXW5 family. As to quaternary structure, part of the SCF (SKP1-CUL1-F-box) E3 ubiquitin-protein ligase complex SCF(FBXW5) composed of CUL1, SKP1, RBX1 and FBXW5. Component of the DCX(FBXW5) E3 ubiquitin ligase complex, at least composed of (CUL4A or CUL4B), DDB1, FBXW5 and RBX1. Interacts with CDC20, TSC1, TSC2 and SASS6. Interacts with EPS8. Interacts with TNFAIP8L1; TNFAIP8L1 competes with TSC2 to bind FBXW5 increasing TSC2 stability by preventing its ubiquitination. Post-translationally, phosphorylated at Ser-151 by PLK4 during the G1/S transition, leading to inhibit its ability to ubiquitinate SASS6. In terms of processing, ubiquitinated and degraded by the APC/C complex during mitosis and G1 phase. In terms of tissue distribution, widely expressed in adult and embryonal tissues.

It is found in the cytoplasm. It functions in the pathway protein modification; protein ubiquitination. Substrate recognition component of both SCF (SKP1-CUL1-F-box protein) and DCX (DDB1-CUL4-X-box) E3 ubiquitin-protein ligase complexes. Substrate-specific adapter of the DCX(FBXW5) E3 ubiquitin-protein ligase complex which mediates the polyubiquitination and subsequent degradation of TSC2. May also act as a negative regulator of MAP3K7/TAK1 signaling in the interleukin-1B (IL1B) signaling pathway. Substrate recognition component of the SCF(FBXW5) E3 ubiquitin-protein ligase complex which mediates the ubiquitination and subsequent proteasomal degradation of SASS6 during S phase, leading to prevent centriole reduplication. The SCF(FBXW5) complex also mediates ubiquitination and degradation of actin-regulator EPS8 during G2 phase, leading to the transient degradation of EPS8 and subsequent cell shape changes required to allow mitotic progression. This is F-box/WD repeat-containing protein 5 (Fbxw5) from Mus musculus (Mouse).